The sequence spans 289 residues: Energy-coupling factor transporter ATP-binding protein EcfA2 (289 aa).

Residues 3-245 (IEFKNVDYVY…QEWVKKHYLD (243 aa)) form the ABC transporter domain. Residue 40–47 (GHTGSGKS) participates in ATP binding.

It belongs to the ABC transporter superfamily. Energy-coupling factor EcfA family. In terms of assembly, forms a stable energy-coupling factor (ECF) transporter complex composed of 2 membrane-embedded substrate-binding proteins (S component), 2 ATP-binding proteins (A component) and 2 transmembrane proteins (T component).

The protein localises to the cell membrane. In terms of biological role, ATP-binding (A) component of a common energy-coupling factor (ECF) ABC-transporter complex. Unlike classic ABC transporters this ECF transporter provides the energy necessary to transport a number of different substrates. The sequence is that of Energy-coupling factor transporter ATP-binding protein EcfA2 from Lactobacillus johnsonii (strain CNCM I-12250 / La1 / NCC 533).